The sequence spans 657 residues: Probable potassium transport system protein Kup (657 aa).

The next 12 membrane-spanning stretches (helical) occupy residues 14-34 (IGGL…SPLY), 47-67 (ADIV…QTTI), 96-116 (IQWL…DGII), 140-160 (TIVY…QFGT), 166-186 (FFAP…FIQI), 201-221 (AYHL…VFLC), 242-262 (ISWI…AAYL), 283-303 (LIMP…AAVI), 340-360 (LYIP…VLHF), 371-391 (GLAI…YLIM), 396-416 (LYFM…FLIA), and 425-445 (GYVT…WYLA).

This sequence belongs to the HAK/KUP transporter (TC 2.A.72) family.

It localises to the cell inner membrane. The enzyme catalyses K(+)(in) + H(+)(in) = K(+)(out) + H(+)(out). Its function is as follows. Transport of potassium into the cell. Likely operates as a K(+):H(+) symporter. The protein is Probable potassium transport system protein Kup of Flavobacterium johnsoniae (strain ATCC 17061 / DSM 2064 / JCM 8514 / BCRC 14874 / CCUG 350202 / NBRC 14942 / NCIMB 11054 / UW101) (Cytophaga johnsonae).